The primary structure comprises 106 residues: YcgL domain-containing protein PsycPRwf_1721 (106 aa).

Positions 1-94 (MHCDIYKFPK…PSDVLLAQAQ (94 aa)) constitute a YcgL domain.

This is YcgL domain-containing protein PsycPRwf_1721 from Psychrobacter sp. (strain PRwf-1).